The primary structure comprises 207 residues: Ion-translocating oxidoreductase complex subunit G (207 aa).

A helical transmembrane segment spans residues 11–31 (GILLGFIALLCTIISTGIFFL). Position 175 is an FMN phosphoryl threonine (Thr-175).

This sequence belongs to the RnfG family. In terms of assembly, the complex is composed of six subunits: RnfA, RnfB, RnfC, RnfD, RnfE and RnfG. FMN is required as a cofactor.

The protein resides in the cell inner membrane. In terms of biological role, part of a membrane-bound complex that couples electron transfer with translocation of ions across the membrane. The sequence is that of Ion-translocating oxidoreductase complex subunit G from Haemophilus influenzae (strain 86-028NP).